Reading from the N-terminus, the 219-residue chain is Probable GTP-binding protein EngB (219 aa).

One can recognise an EngB-type G domain in the interval 31-205 (VGVEIAFAGR…LSILNEWCHP (175 aa)). GTP is bound by residues 39–46 (GRSNAGKS), 66–70 (GRTQL), 84–87 (DLPG), 151–154 (TKSD), and 184–186 (FSS). Mg(2+) is bound by residues S46 and T68.

It belongs to the TRAFAC class TrmE-Era-EngA-EngB-Septin-like GTPase superfamily. EngB GTPase family. The cofactor is Mg(2+).

In terms of biological role, necessary for normal cell division and for the maintenance of normal septation. This chain is Probable GTP-binding protein EngB, found in Shewanella denitrificans (strain OS217 / ATCC BAA-1090 / DSM 15013).